The chain runs to 1323 residues: uncharacterized protein (1323 aa).

A compositionally biased stretch (basic and acidic residues) spans methionine 1–arginine 11. Disordered regions lie at residues methionine 1–tyrosine 57 and isoleucine 79–threonine 112. Residues lysine 12–lysine 21 are compositionally biased toward low complexity. Serine 24 carries the phosphoserine modification. A compositionally biased stretch (basic and acidic residues) spans aspartate 27–threonine 40. Composition is skewed to polar residues over residues asparagine 42 to tyrosine 57 and histidine 80 to isoleucine 105. 6 WD repeats span residues arginine 271–isoleucine 314, glycine 320–asparagine 360, aspartate 364–histidine 403, glutamate 409–glutamate 449, threonine 453–proline 494, and glycine 502–methionine 551. In terms of domain architecture, RWD spans glutamate 671–aspartate 779. A compositionally biased stretch (polar residues) spans serine 879 to threonine 888. Positions serine 879–serine 904 are disordered. The RING-type; degenerate zinc finger occupies cysteine 1265–cysteine 1309.

Belongs to the WD repeat WDR59 family.

In terms of biological role, may be involved in telomere capping. This is an uncharacterized protein from Schizosaccharomyces pombe (strain 972 / ATCC 24843) (Fission yeast).